Reading from the N-terminus, the 491-residue chain is Pentatricopeptide repeat-containing protein At5g27460 (491 aa).

PPR repeat units lie at residues 69–99 (SLSE…MENQ), 105–139 (SVYD…SVSM), 142–176 (AKSA…GFLV), 177–211 (TPHP…KIPR), 212–246 (NVLS…KSVE), 248–278 (GWSS…AEKM), 283–313 (NRLG…SKSV), 318–348 (SCVN…WEAQ), 353–387 (DVRV…GGTP), and 388–426 (NYKT…HWRP).

This sequence belongs to the PPR family. P subfamily.

This is Pentatricopeptide repeat-containing protein At5g27460 from Arabidopsis thaliana (Mouse-ear cress).